The sequence spans 354 residues: Ferredoxin--NADP reductase (354 aa).

FAD contacts are provided by D42, Q50, Y55, I95, F130, D299, and T339.

This sequence belongs to the ferredoxin--NADP reductase type 2 family. In terms of assembly, homodimer. FAD is required as a cofactor.

It carries out the reaction 2 reduced [2Fe-2S]-[ferredoxin] + NADP(+) + H(+) = 2 oxidized [2Fe-2S]-[ferredoxin] + NADPH. This chain is Ferredoxin--NADP reductase, found in Acidovorax sp. (strain JS42).